The primary structure comprises 838 residues: Envelope glycoprotein H (838 aa).

Residues Met1 to Gly18 form the signal peptide. At Gln19–Pro803 the chain is on the virion surface side. Residues Asn73 and Asn120 are each glycosylated (N-linked (GlcNAc...) asparagine; by host). Positions Phe174 to His204 are disordered. A glycan (N-linked (GlcNAc...) asparagine; by host) is linked at Asn216. The interaction with gL stretch occupies residues Asp259–Val323. Asn332, Asn437, Asn670, and Asn784 each carry an N-linked (GlcNAc...) asparagine; by host glycan. A helical membrane pass occupies residues Gly804–Leu824. Topologically, residues Lys825–Glu838 are intravirion.

It belongs to the herpesviridae glycoprotein H family. As to quaternary structure, interacts with glycoprotein L (gL); this interaction is necessary for the correct processing and cell surface expression of gH. The heterodimer gH/gL seems to interact with gB trimers during fusion. N-glycosylated, O-glycosylated, and sialylated.

The protein localises to the virion membrane. It localises to the host cell membrane. Its subcellular location is the host endosome membrane. In terms of biological role, the heterodimer glycoprotein H-glycoprotein L is required for the fusion of viral and plasma membranes leading to virus entry into the host cell. Following initial binding to host receptor, membrane fusion is mediated by the fusion machinery composed of gB and the heterodimer gH/gL. May also be involved in the fusion between the virion envelope and the outer nuclear membrane during virion morphogenesis. The polypeptide is Envelope glycoprotein H (Homo sapiens (Human)).